The sequence spans 262 residues: 26 kDa secreted antigen (262 aa).

The signal sequence occupies residues 1–21 (MSVVHKACLIALLFVSSGVAQ). ShKT domains follow at residues 23–57 (CMDS…CNTC) and 59–93 (CRDE…CGLC). 6 cysteine pairs are disulfide-bonded: Cys-23/Cys-57, Cys-30/Cys-50, Cys-37/Cys-54, Cys-59/Cys-93, Cys-66/Cys-86, and Cys-73/Cys-90.

Belongs to the phosphatidylethanolamine-binding protein family.

It is found in the secreted. In terms of biological role, binds phosphatidylethanolamine. This is 26 kDa secreted antigen (TES-26) from Toxocara canis (Canine roundworm).